A 474-amino-acid polypeptide reads, in one-letter code: Cysteine protease ATG4A (474 aa).

The tract at residues 1–32 (MTSLPGRGVSPSSSDPLCEGNAAPSSSSSSGQ) is disordered. The active-site Nucleophile is the C161. Catalysis depends on residues D358 and H360. Polar residues predominate over residues 439–449 (KQMYNEESSSG). The disordered stretch occupies residues 439–474 (KQMYNEESSSGDGMDSINVEGLDGSGETGEEEWQIL).

It belongs to the peptidase C54 family. As to quaternary structure, interacts with ATG8.

The protein localises to the cytoplasm. The catalysed reaction is [protein]-C-terminal L-amino acid-glycyl-phosphatidylethanolamide + H2O = [protein]-C-terminal L-amino acid-glycine + a 1,2-diacyl-sn-glycero-3-phosphoethanolamine. Cysteine protease that plays a key role in autophagy by mediating both proteolytic activation and delipidation of ATG8 family proteins. The protease activity is required for proteolytic activation of ATG8 family proteins: cleaves the C-terminal amino acid of ATG8 proteins to reveal a C-terminal glycine. Exposure of the glycine at the C-terminus is essential for ATG8 proteins conjugation to phosphatidylethanolamine (PE) and insertion to membranes, which is necessary for autophagy. In addition to the protease activity, also mediates delipidation of PE-conjugated ATG8 proteins. This chain is Cysteine protease ATG4A (ATG4A), found in Oryza sativa subsp. japonica (Rice).